The primary structure comprises 93 residues: Cell division topological specificity factor (93 aa).

It belongs to the MinE family.

Functionally, prevents the cell division inhibition by proteins MinC and MinD at internal division sites while permitting inhibition at polar sites. This ensures cell division at the proper site by restricting the formation of a division septum at the midpoint of the long axis of the cell. This is Cell division topological specificity factor from Methylococcus capsulatus (strain ATCC 33009 / NCIMB 11132 / Bath).